The sequence spans 263 residues: 3-deoxy-manno-octulosonate cytidylyltransferase (263 aa).

This sequence belongs to the KdsB family.

The protein localises to the cytoplasm. The enzyme catalyses 3-deoxy-alpha-D-manno-oct-2-ulosonate + CTP = CMP-3-deoxy-beta-D-manno-octulosonate + diphosphate. Its pathway is nucleotide-sugar biosynthesis; CMP-3-deoxy-D-manno-octulosonate biosynthesis; CMP-3-deoxy-D-manno-octulosonate from 3-deoxy-D-manno-octulosonate and CTP: step 1/1. It participates in bacterial outer membrane biogenesis; lipopolysaccharide biosynthesis. Activates KDO (a required 8-carbon sugar) for incorporation into bacterial lipopolysaccharide in Gram-negative bacteria. In Burkholderia cenocepacia (strain ATCC BAA-245 / DSM 16553 / LMG 16656 / NCTC 13227 / J2315 / CF5610) (Burkholderia cepacia (strain J2315)), this protein is 3-deoxy-manno-octulosonate cytidylyltransferase.